The chain runs to 339 residues: DNA-directed RNA polymerase subunit alpha (339 aa).

Residues 1–235 are alpha N-terminal domain (alpha-NTD); it reads MVIQKNWQEL…DQLQVFVNFE (235 aa). The alpha C-terminal domain (alpha-CTD) stretch occupies residues 251–339; it reads FNPALLKKVD…DLAKRFEEHY (89 aa).

It belongs to the RNA polymerase alpha chain family. In terms of assembly, homodimer. The RNAP catalytic core consists of 2 alpha, 1 beta, 1 beta' and 1 omega subunit. When a sigma factor is associated with the core the holoenzyme is formed, which can initiate transcription.

The catalysed reaction is RNA(n) + a ribonucleoside 5'-triphosphate = RNA(n+1) + diphosphate. DNA-dependent RNA polymerase catalyzes the transcription of DNA into RNA using the four ribonucleoside triphosphates as substrates. This chain is DNA-directed RNA polymerase subunit alpha, found in Methylorubrum populi (strain ATCC BAA-705 / NCIMB 13946 / BJ001) (Methylobacterium populi).